Reading from the N-terminus, the 1133-residue chain is ATP-dependent DNA helicase homolog MER3 (1133 aa).

The region spanning 34–229 (PLCFHSDINM…WLKVPTAGIK (196 aa)) is the Helicase ATP-binding domain. 47–54 (APTGSGKT) serves as a coordination point for ATP. The DEVH box signature appears at 165 to 168 (DEVH). One can recognise a Helicase C-terminal domain in the interval 263-460 (YIYDILMQYS…CLIEHLTAEI (198 aa)). The SEC63 domain maps to 536–847 (EPGRLMTKYY…FEEYIGIDLH (312 aa)). Residues 878–919 (ACIADDDNPVTSGPSNRKDKKDDMPSFKLIDDDSEEEKEPYV) are disordered. The span at 893–908 (NRKDKKDDMPSFKLID) shows a compositional bias: basic and acidic residues. Residues 909 to 919 (DDSEEEKEPYV) show a composition bias toward acidic residues.

It belongs to the helicase family. SKI2 subfamily. In terms of tissue distribution, expressed in meiocytes during meiosis.

The protein localises to the nucleus. The catalysed reaction is Couples ATP hydrolysis with the unwinding of duplex DNA by translocating in the 3'-5' direction.. It carries out the reaction ATP + H2O = ADP + phosphate + H(+). In terms of biological role, DNA helicase required for crossover formation, complete synapsis of homologous chromosomes and bivalent formation during meiosis. Is specific to recombination events resulting in interference-sensitive crossovers (class I meiotic crossover). This chain is ATP-dependent DNA helicase homolog MER3, found in Arabidopsis thaliana (Mouse-ear cress).